The chain runs to 74 residues: Peptide ToAP4 (74 aa).

A signal peptide spans 1-22 (MQIKHLITLFFLVLIVADQCSA). Position 39 is a lysine amide (Lys39). The propeptide occupies 40-74 (GGRRKREIAAQIEQYRDLQKREAELEELLDRLPMF).

This sequence belongs to the non-disulfide-bridged peptide (NDBP) superfamily. Short antimicrobial peptide (group 4) family. In terms of tissue distribution, expressed by the venom gland.

The protein resides in the secreted. Shows anti-inflammatory activities, since it decreases release of pro-inflammatory cytokines, and increases release of anti-inflammatory cytokines. Acts by blocking the Toll-like receptor 4 (TLR4). Also increases MHC-II expression in LPS-stimulated cells. Does not show antibacterial activity on Mycobacterium abscessus subsp. massiliense. Does not show antifungal activity. Has low hemolytic activity on human erythrocyte and low monocyte cytotoxicity. In vivo, does not induce immune cell migration. Helical wheel projections predict an amphipathic peptide with distinct hydrophobic and hydrophilic faces. This chain is Peptide ToAP4, found in Tityus obscurus (Amazonian scorpion).